The sequence spans 309 residues: Protein FdhE homolog (309 aa).

This sequence belongs to the FdhE family.

It is found in the cytoplasm. Necessary for formate dehydrogenase activity. The chain is Protein FdhE homolog from Pseudomonas aeruginosa (strain ATCC 15692 / DSM 22644 / CIP 104116 / JCM 14847 / LMG 12228 / 1C / PRS 101 / PAO1).